Reading from the N-terminus, the 249-residue chain is Aliphatic sulfonates import ATP-binding protein SsuB 2 (249 aa).

An ABC transporter domain is found at 5–233; the sequence is LDLLEIRKAY…PRDRRAVELA (229 aa). 37 to 44 serves as a coordination point for ATP; it reads GPSGCGKS.

This sequence belongs to the ABC transporter superfamily. Aliphatic sulfonates importer (TC 3.A.1.17.2) family. The complex is composed of two ATP-binding proteins (SsuB), two transmembrane proteins (SsuC) and a solute-binding protein (SsuA).

Its subcellular location is the cell inner membrane. The catalysed reaction is ATP + H2O + aliphatic sulfonate-[sulfonate-binding protein]Side 1 = ADP + phosphate + aliphatic sulfonateSide 2 + [sulfonate-binding protein]Side 1.. Its function is as follows. Part of the ABC transporter complex SsuABC involved in aliphatic sulfonates import. Responsible for energy coupling to the transport system. In Pseudomonas aeruginosa (strain ATCC 15692 / DSM 22644 / CIP 104116 / JCM 14847 / LMG 12228 / 1C / PRS 101 / PAO1), this protein is Aliphatic sulfonates import ATP-binding protein SsuB 2.